Consider the following 177-residue polypeptide: Bifunctional protein PyrR (177 aa).

A PRPP-binding motif is present at residues 98-110; sequence IILVDDVIYTGRT.

The protein belongs to the purine/pyrimidine phosphoribosyltransferase family. PyrR subfamily. As to quaternary structure, homodimer and homohexamer; in equilibrium.

It catalyses the reaction UMP + diphosphate = 5-phospho-alpha-D-ribose 1-diphosphate + uracil. Functionally, regulates transcriptional attenuation of the pyrimidine nucleotide (pyr) operon by binding in a uridine-dependent manner to specific sites on pyr mRNA. This disrupts an antiterminator hairpin in the RNA and favors formation of a downstream transcription terminator, leading to a reduced expression of downstream genes. In terms of biological role, also displays a weak uracil phosphoribosyltransferase activity which is not physiologically significant. The chain is Bifunctional protein PyrR from Clostridium kluyveri (strain ATCC 8527 / DSM 555 / NBRC 12016 / NCIMB 10680 / K1).